A 300-amino-acid polypeptide reads, in one-letter code: Acetylglutamate kinase (300 aa).

Substrate contacts are provided by residues 73–74 (GG), R95, and N197.

It belongs to the acetylglutamate kinase family. ArgB subfamily.

The protein localises to the cytoplasm. The enzyme catalyses N-acetyl-L-glutamate + ATP = N-acetyl-L-glutamyl 5-phosphate + ADP. It functions in the pathway amino-acid biosynthesis; L-arginine biosynthesis; N(2)-acetyl-L-ornithine from L-glutamate: step 2/4. Its function is as follows. Catalyzes the ATP-dependent phosphorylation of N-acetyl-L-glutamate. This Polynucleobacter asymbioticus (strain DSM 18221 / CIP 109841 / QLW-P1DMWA-1) (Polynucleobacter necessarius subsp. asymbioticus) protein is Acetylglutamate kinase.